The primary structure comprises 234 residues: CHD1 helical C-terminal domain containing protein 1 (234 aa).

The segment at 1-38 (MEASDGQADEREEPLEQGTNARSLERRSSTTPAKDSLV) is disordered. The segment at 44 to 145 (LDRDTFKICK…NNQTTKFLMA (102 aa)) is CHD1 helical C-terminal domain (CHCT). The tract at residues 200–234 (LRARGPRRRGSKLPQEPKLKRRRIKEAPDTPETCL) is disordered.

It localises to the cytoplasm. The protein localises to the nucleus. May play a role in regulation of apoptosis. The sequence is that of CHD1 helical C-terminal domain containing protein 1 (CHCT1) from Bos taurus (Bovine).